Reading from the N-terminus, the 306-residue chain is Plant-type L-asparaginase (306 aa).

Thr-176 (nucleophile) is an active-site residue. Substrate-binding positions include 203 to 206 and 225 to 228; these read RVGD and TGLG.

The protein belongs to the Ntn-hydrolase family. As to quaternary structure, heterotetramer of two alpha and two beta chains arranged as a dimer of alpha/beta heterodimers. The uncleaved protein forms homodimers. Autocleaved. Generates the alpha and beta subunits. The N-terminal residue of the beta subunit is thought to be responsible for the nucleophile hydrolase activity. Predominantly produced in the uncleaved form when gene expression is induced at 37 degrees Celsius with 0.5 mM IPTG. When produced at 42 degrees Celsius without adding IPTG, approximately 90% of the protein is found in the cleaved form, while the remaining 10% is observed as uncleaved precursor. Undergoes complete auto-cleavage within 24 hours at 37 degrees Celsius.

The enzyme catalyses L-asparagine + H2O = L-aspartate + NH4(+). With respect to regulation, undergoes auto-cleavage in a temperature-dependent and glycine-independent manner. Metal ions and EDTA do not have any significant effect on enzyme activity, indicating that activity is metal-independent. Functionally, catalyzes the hydrolysis of L-asparagine into L-aspartate and ammonia. Also displays D-asparaginase activity, which is about 10% of the L-asparaginase activity. Does not exhibit glutaminase activity. The sequence is that of Plant-type L-asparaginase from Thermococcus kodakarensis (strain ATCC BAA-918 / JCM 12380 / KOD1) (Pyrococcus kodakaraensis (strain KOD1)).